The following is a 338-amino-acid chain: Glycerol-3-phosphate dehydrogenase [NAD(P)+] (338 aa).

Positions 11, 12, 32, 33, and 106 each coordinate NADPH. Sn-glycerol 3-phosphate is bound by residues Lys-106, Gly-137, and Ser-139. Ala-141 lines the NADPH pocket. The sn-glycerol 3-phosphate site is built by Lys-192, Asp-245, Ser-255, Arg-256, and Asn-257. Residue Lys-192 is the Proton acceptor of the active site. Arg-256 is an NADPH binding site. Val-280 and Glu-282 together coordinate NADPH.

Belongs to the NAD-dependent glycerol-3-phosphate dehydrogenase family.

It is found in the cytoplasm. It catalyses the reaction sn-glycerol 3-phosphate + NAD(+) = dihydroxyacetone phosphate + NADH + H(+). It carries out the reaction sn-glycerol 3-phosphate + NADP(+) = dihydroxyacetone phosphate + NADPH + H(+). It participates in membrane lipid metabolism; glycerophospholipid metabolism. Functionally, catalyzes the reduction of the glycolytic intermediate dihydroxyacetone phosphate (DHAP) to sn-glycerol 3-phosphate (G3P), the key precursor for phospholipid synthesis. In Lysinibacillus sphaericus (strain C3-41), this protein is Glycerol-3-phosphate dehydrogenase [NAD(P)+].